Reading from the N-terminus, the 3933-residue chain is Protein DOP1 homolog PFC0245c (3933 aa).

4 helical membrane passes run 70–90, 98–118, 140–160, and 163–183; these read LNPL…SSIF, FINN…HCTI, IFAY…NNIL, and IYSI…WLLL. 3 disordered regions span residues 468 to 494, 543 to 600, and 614 to 656; these read RLNN…KYQG, ININ…NMLH, and KKIN…SSSS. The span at 470–486 shows a compositional bias: low complexity; the sequence is NNNNNNNNNNNNNNNNN. Positions 546–561 are enriched in acidic residues; it reads NDDDNLNYDDNEDDEY. Low complexity-rich tracts occupy residues 563-576 and 585-597; these read NYHN…NYFN and ENNN…NNNN. Positions 620 to 651 form a coiled coil; that stretch reads GQTNNYDDDEEEEDEEEEDNNNNTSYNNNNNN. Residues 625–639 are compositionally biased toward acidic residues; that stretch reads YDDDEEEEDEEEEDN. Residues 640-656 show a composition bias toward low complexity; that stretch reads NNNTSYNNNNNNSSSSS. Transmembrane regions (helical) follow at residues 782–802, 842–862, and 1186–1206; these read MLNL…YTFY, YLYI…MNFL, and FYFW…KSLL. The span at 1216–1255 shows a compositional bias: acidic residues; sequence DDTDDDDDDDDDDDDEEEDDDDEDDDDEDDEEEDDEEDLG. Disordered stretches follow at residues 1216-1284 and 1361-1405; these read DDTD…MNKK and TNNN…NNFN. The segment covering 1263 to 1284 has biased composition (basic residues); it reads SSKKGKKKKKKSVHKNKLMNKK. A coiled-coil region spans residues 1349-1403; that stretch reads ELNKMKYMNEDITNNNNNINNNSNNNNNNKNNINNNNNNNNNNNNNNNNLNNLNN. Residues 1362–1405 are compositionally biased toward low complexity; that stretch reads NNNNNINNNSNNNNNNKNNINNNNNNNNNNNNNNNNLNNLNNFN. 2 consecutive transmembrane segments (helical) span residues 1462 to 1482 and 1997 to 2017; these read FIKL…MFCL and KNIF…KLIY. Residues 2691 to 2739 are disordered; the sequence is HRRKMNRQNIRTDSSNNNNNNNINSNNNNNNNNNNNNNNNNNNNNNIYN. A compositionally biased stretch (low complexity) spans 2704–2739; sequence SSNNNNNNNINSNNNNNNNNNNNNNNNNNNNNNIYN. 5 helical membrane passes run 2860 to 2880, 2905 to 2925, 3017 to 3037, 3200 to 3220, and 3276 to 3296; these read INLN…CTLT, IMSS…HIYV, YSEI…YHTV, ILIL…YIII, and IIIN…SWIF. The segment at 3620 to 3646 is disordered; the sequence is LKNEKSTRTYNSSLQEGSDYDEEEDEE. Positions 3637 to 3646 are enriched in acidic residues; it reads SDYDEEEDEE. A coiled-coil region spans residues 3897–3925; sequence KEETIILLKELNSVENDINDLFLEVDLNE.

This sequence belongs to the DOP1 family.

It is found in the membrane. Its function is as follows. May be involved in protein traffic between late Golgi and early endosomes. This Plasmodium falciparum (isolate 3D7) protein is Protein DOP1 homolog PFC0245c.